The chain runs to 242 residues: 1-(5-phosphoribosyl)-5-[(5-phosphoribosylamino)methylideneamino] imidazole-4-carboxamide isomerase (242 aa).

The Proton acceptor role is filled by aspartate 10. Catalysis depends on aspartate 131, which acts as the Proton donor.

It belongs to the HisA/HisF family.

Its subcellular location is the cytoplasm. The catalysed reaction is 1-(5-phospho-beta-D-ribosyl)-5-[(5-phospho-beta-D-ribosylamino)methylideneamino]imidazole-4-carboxamide = 5-[(5-phospho-1-deoxy-D-ribulos-1-ylimino)methylamino]-1-(5-phospho-beta-D-ribosyl)imidazole-4-carboxamide. The protein operates within amino-acid biosynthesis; L-histidine biosynthesis; L-histidine from 5-phospho-alpha-D-ribose 1-diphosphate: step 4/9. The polypeptide is 1-(5-phosphoribosyl)-5-[(5-phosphoribosylamino)methylideneamino] imidazole-4-carboxamide isomerase (Bifidobacterium animalis subsp. lactis (strain AD011)).